We begin with the raw amino-acid sequence, 380 residues long: Pectinesterase QRT1 (380 aa).

The first 26 residues, Met-1 to Ala-26, serve as a signal peptide directing secretion. N-linked (GlcNAc...) asparagine glycosylation is found at Asn-74 and Asn-137. Substrate contacts are provided by Thr-164 and Gln-198. Asp-221 functions as the Proton donor in the catalytic mechanism. Asn-227 carries N-linked (GlcNAc...) asparagine glycosylation. Cys-235 and Cys-255 are joined by a disulfide. Catalysis depends on Asp-242, which acts as the Nucleophile. Positions 298 and 300 each coordinate substrate. An N-linked (GlcNAc...) asparagine glycan is attached at Asn-302.

Belongs to the pectinesterase family. Expressed in flower buds, siliques, developing guard cells, floral nectares, at the stigmatic surface, in the hypocotyl-root transition zone and the area of lateral root emergence. Not expressed in mature leaves.

The protein localises to the secreted. The protein resides in the cell wall. It catalyses the reaction [(1-&gt;4)-alpha-D-galacturonosyl methyl ester](n) + n H2O = [(1-&gt;4)-alpha-D-galacturonosyl](n) + n methanol + n H(+). It participates in glycan metabolism; pectin degradation; 2-dehydro-3-deoxy-D-gluconate from pectin: step 1/5. In terms of biological role, pectinesterase required for cell type-specific pectin degradation to separate microspores. This is Pectinesterase QRT1 from Arabidopsis thaliana (Mouse-ear cress).